Reading from the N-terminus, the 318-residue chain is Actin-related protein 2/3 complex subunit 2A (318 aa).

Positions 297–318 are disordered; it reads RSMNNKSFKRLGLNEVNHTNSK.

The protein belongs to the ARPC2 family. In terms of assembly, component of the Arp2/3 complex composed of ARP2, ARP3, ARPC1/p41-ARC, ARPC2/p34-ARC, ARPC3/p21-ARC, ARPC4/p20-ARC and ARPC5/p16-ARC. Interacts with ARPC4. Expressed at low levels in all tissues with a relatively highest expression in inflorescences.

The protein localises to the cytoplasm. It is found in the cytoskeleton. Its subcellular location is the cell projection. Functionally, functions as actin-binding component of the Arp2/3 complex which is involved in regulation of actin polymerization and together with an activating nucleation-promoting factor (NPF) mediates the formation of branched actin networks. Seems to contact the mother actin filament. Arp2/3 complex plays a critical role in the control of cell morphogenesis via the modulation of cell polarity development. The protein is Actin-related protein 2/3 complex subunit 2A (ARPC2A) of Arabidopsis thaliana (Mouse-ear cress).